A 117-amino-acid polypeptide reads, in one-letter code: Small ribosomal subunit protein uS17 (117 aa).

The segment at Met1–Arg42 is disordered.

This sequence belongs to the universal ribosomal protein uS17 family. As to quaternary structure, part of the 30S ribosomal subunit.

One of the primary rRNA binding proteins, it binds specifically to the 5'-end of 16S ribosomal RNA. This is Small ribosomal subunit protein uS17 from Mycolicibacterium paratuberculosis (strain ATCC BAA-968 / K-10) (Mycobacterium paratuberculosis).